The sequence spans 156 residues: Protein CURVATURE THYLAKOID 1C, chloroplastic (156 aa).

Residues 1–55 constitute a chloroplast transit peptide; it reads MASISATLPSPLLLTQRKSNLTSIQKLPFSLTRGTNDLSPLSLTRNPSSISLMVK. The Stromal portion of the chain corresponds to 56 to 83; the sequence is ASGESSDSSTDLDVVSTIQNVWDKSEDR. Residues 84-104 form a helical membrane-spanning segment; that stretch reads LGLIGLGFAGIVALWASLNLI. Topologically, residues 105–109 are lumenal; that stretch reads TAIDK. A helical transmembrane segment spans residues 110–130; that stretch reads LPVISSGFELVGILFSTWFTY. Residues 131-156 lie on the Stromal side of the membrane; that stretch reads RYLLFKPDRQELSKIVKKSVADILGQ.

This sequence belongs to the CURT family. Homo- and heterodimers and trimers. Interacts with PSAD2.

It localises to the plastid. Its subcellular location is the chloroplast thylakoid membrane. Determines thylakoid architecture by inducing membrane curvature. In Arabidopsis thaliana (Mouse-ear cress), this protein is Protein CURVATURE THYLAKOID 1C, chloroplastic (CURT1C).